A 208-amino-acid chain; its full sequence is MSRRYDSRTTIFSPEGRLYQVEYAMEAIGNAGSAIGILAKDGVVLVGEKKVTSKLLQTSSSMEKMYKIDDHVACAVAGIMSDANILINTARVQAQRWDRNHGFQLYMSDPSGNYGGWQAAAVGANNQAAQSILKQDYKDDATREEVVQLAIKVLSKTMDSTSLTAEKLELAELYLTPSKCVKYHVHSPDSLTKLLVKHGVTQPAAETS.

It belongs to the peptidase T1A family. In terms of assembly, component of the 20S core complex of the 26S proteasome. The 26S proteasome is composed of a core protease (CP), known as the 20S proteasome, capped at one or both ends by the 19S regulatory particle (RP/PA700). The 20S proteasome core is composed of 28 subunits that are arranged in four stacked rings, resulting in a barrel-shaped structure. The two end rings are each formed by seven alpha subunits, and the two central rings are each formed by seven beta subunits. The catalytic chamber with the active sites is on the inside of the barrel.

The protein resides in the cytoplasm. The protein localises to the nucleus. Its function is as follows. The proteasome is a multicatalytic proteinase complex which is characterized by its ability to cleave peptides with Arg, Phe, Tyr, Leu, and Glu adjacent to the leaving group at neutral or slightly basic pH. The proteasome has an ATP-dependent proteolytic activity. The protein is Putative proteasome subunit alpha type-4-B (PAC2) of Arabidopsis thaliana (Mouse-ear cress).